The primary structure comprises 132 residues: MLLRMSEHRNEALGNYLEMRLKSSFLRGLGSWKSNPLRLGGWTILLTLTMGQGEPGGPQGDPWVPHELLLPSLCDSSHASSWGSGSITCAWRGGDSSSHPLVSGHILSNSPVAAVMCSSMGTHLSPFKGTLL.

As to expression, expressed in lymphoid tissues; Detected in spleen as well as in B-cell lines, NK cell lines and activated lymphocytes.

The protein is HLA class I histocompatibility antigen protein P5 (HCP5) of Homo sapiens (Human).